A 458-amino-acid chain; its full sequence is Vasoactive intestinal polypeptide receptor 1 (458 aa).

An N-terminal signal peptide occupies residues 1-31 (MRPLSPPPAGWFCVLAGVLACVLGPVGSWAV). At 32–142 (GLQQEECDYL…DEQQTVFYNS (111 aa)) the chain is on the extracellular side. 5 cysteine pairs are disulfide-bonded: C38–C209, C51–C73, C64–C106, C87–C123, and C216–C286. N59, N70, N101, and N105 each carry an N-linked (GlcNAc...) asparagine glycan. Residues 143–167 (VKTGYTIGYSLSLAALLVATAILSL) form a helical membrane-spanning segment. Residues 168–175 (FRKLHCTR) are Cytoplasmic-facing. The helical transmembrane segment at 176–197 (NYIHMHLFISFILRATAVFIKD) threads the bilayer. At 198–217 (LALFDSEESDHCSKGSVGCK) the chain is on the extracellular side. Residues 218 to 242 (AAVVLFQYCVMANFFWLLVEGLYLH) traverse the membrane as a helical segment. At 243 to 255 (TLLAVSFFSERKY) the chain is on the cytoplasmic side. A helical transmembrane segment spans residues 256–277 (FWGYIFVGWGVPSTFIMVWTVV). Residues 278–292 (RIHFEDYGCWDTIHS) lie on the Extracellular side of the membrane. A helical transmembrane segment spans residues 293-317 (SLWWIIKAPILASILVNFILFIRII). Residues 318–339 (GILVQKLRPPDVGKSDNSPYSR) are Cytoplasmic-facing. Residues 340 to 360 (LAKSTLLLIPLFGVHYIMFAF) traverse the membrane as a helical segment. Residues 361 to 368 (FPDNFKAE) lie on the Extracellular side of the membrane. Residues 369–392 (VKMVFELIVGSFQGCVVAILYCFL) traverse the membrane as a helical segment. Residues 393–458 (NGEVQAELRR…SSFQAEVSLV (66 aa)) lie on the Cytoplasmic side of the membrane.

It belongs to the G-protein coupled receptor 2 family. As to quaternary structure, interacts with ADCYAP1/PACAP; activated by both PACAP27 and PACAP38 neuropeptides. Interacts with VIP; the interaction results in VIPR1 activation.

The protein localises to the cell membrane. G protein-coupled receptor activated by the neuropeptides vasoactive intestinal peptide (VIP) and pituitary adenylate cyclase-activating polypeptide (ADCYAP1/PACAP). Binds VIP and both PACAP27 and PACAP38 bioactive peptides with the following order of ligand affinity VIP = PACAP27 &gt; PACAP38. Ligand binding causes a conformation change that triggers signaling via guanine nucleotide-binding proteins (G proteins) and modulates the activity of downstream effectors. Activates cAMP-dependent pathway. The chain is Vasoactive intestinal polypeptide receptor 1 (VIPR1) from Sus scrofa (Pig).